The following is a 122-amino-acid chain: MSNIESIVEKLSSLTLIEAAELSKRLEKEWGVSASAPVSVVAPVAAEAGSAASEKTEFEVVLKGFDDPKKKIAVIKEVRAITDLGLKEAKELVESAPKSLKTGLSKDEANEMKKKLEDAGAT.

A disordered region spans residues 96–122 (APKSLKTGLSKDEANEMKKKLEDAGAT). Over residues 104–122 (LSKDEANEMKKKLEDAGAT) the composition is skewed to basic and acidic residues.

The protein belongs to the bacterial ribosomal protein bL12 family. Homodimer. Part of the ribosomal stalk of the 50S ribosomal subunit. Forms a multimeric L10(L12)X complex, where L10 forms an elongated spine to which 2 to 4 L12 dimers bind in a sequential fashion. Binds GTP-bound translation factors.

Functionally, forms part of the ribosomal stalk which helps the ribosome interact with GTP-bound translation factors. Is thus essential for accurate translation. This is Large ribosomal subunit protein bL12 from Liberibacter asiaticus (Citrus greening disease).